Here is an 823-residue protein sequence, read N- to C-terminus: Degenerin-like protein asic-1 (823 aa).

The Cytoplasmic portion of the chain corresponds to 1–38 (MGKNSLKRALELDVVDFAEHTSAHGIPRAYVSTGWRRY). Residues 39-59 (MWLLCFLFCLSCFGHQAYLIV) form a helical membrane-spanning segment. Residues 60–767 (ERFNRNDIIV…FGGQLGLWMG (708 aa)) are Extracellular-facing. Disulfide bonds link C86/C518 and C494/C501. Residues N228, N326, N347, N415, and N486 are each glycosylated (N-linked (GlcNAc...) asparagine). N527 and N546 each carry an N-linked (GlcNAc...) asparagine glycan. Intrachain disulfides connect C604–C687, C625–C683, C629–C681, and C638–C664. Positions 767-769 (GVS) match the GAS motif; ion selectivity filter motif. A helical transmembrane segment spans residues 768–788 (VSVITIGEVACFFFEVFISLI). Residues 789-795 (SSNRTKR) are Cytoplasmic-facing.

The protein belongs to the amiloride-sensitive sodium channel (TC 1.A.6) family. In terms of assembly, homotrimer. Heterotrimer; with other ASIC proteins producing channel with different properties.

The protein resides in the cell membrane. Its subcellular location is the postsynaptic cell membrane. It is found in the cell projection. The protein localises to the dendrite. The enzyme catalyses Na(+)(in) = Na(+)(out). It carries out the reaction K(+)(in) = K(+)(out). It catalyses the reaction Li(+)(in) = Li(+)(out). The catalysed reaction is Ca(2+)(in) = Ca(2+)(out). Its function is as follows. Forms voltage-independent, pH-gated trimeric sodium channels that act as postsynaptic excitatory receptors in the nervous system, playing a crucial role in regulating synaptic plasticity, learning, and memory. Promotes synaptic vesicle fusion to positively regulate the release of dopamine at dopaminergic neuron synapses. Displays high selectivity for sodium ions but can also permit the permeation of other cations. The chain is Degenerin-like protein asic-1 from Caenorhabditis elegans.